The chain runs to 143 residues: Boletus edulis lectin (143 aa).

Beta-D-Gal-(1-&gt;3)-alpha-D-GalNAc-binding positions include Ala-30, 49–50, and 72–73; these read SG and HN. N-acetyl-alpha-D-galactosamine is bound by residues 49–50 and 72–73; these read SG and HN. Residues 79–82, Arg-103, and Tyr-114 contribute to the N,N'-diacetylchitobiose site; that span reads DVVT. Residues 79-82, Arg-103, and Tyr-114 each bind N-acetyl-alpha-D-glucosamine; that span reads DVVT.

Belongs to the fungal fruit body lectin family. In terms of assembly, homotetramer.

Functionally, lectin that recognizes O-linked galactose-beta-1,3-N-acetylgalactosamine, a disaccharide (Thomsen-Friedenreich antigen or T-disaccharide), present on cell surface glycoproteins. Can also bind chitin, N,N'-diacetylchitobiose, N-acetylgalactosamine and N-acetylglucosamine. Inhibits proliferation of colon, breast and liver cancer cell lines (in vitro). This chain is Boletus edulis lectin, found in Boletus edulis (King bolete).